The following is a 525-amino-acid chain: GMP synthase [glutamine-hydrolyzing] (525 aa).

Residues 13-202 (TILVLDFGSQ…AVEICQAAQT (190 aa)) form the Glutamine amidotransferase type-1 domain. C89 acts as the Nucleophile in catalysis. Residues H176 and E178 contribute to the active site. The GMPS ATP-PPase domain maps to 203-400 (WTMENFIDTE…LGISHELVWR (198 aa)). Residue 231–237 (SGGVDST) participates in ATP binding. Residues R304, D462, K517, and E523 each contribute to the XMP site.

Homodimer. Requires Mg(2+) as cofactor.

It localises to the cytoplasm. Its subcellular location is the cytosol. The enzyme catalyses XMP + L-glutamine + ATP + H2O = GMP + L-glutamate + AMP + diphosphate + 2 H(+). It participates in purine metabolism; GMP biosynthesis; GMP from XMP (L-Gln route): step 1/1. Catalyzes the conversion of xanthine monophosphate (XMP) to GMP in the presence of glutamine and ATP through an adenyl-XMP intermediate. This is GMP synthase [glutamine-hydrolyzing] (GUA1) from Eremothecium gossypii (strain ATCC 10895 / CBS 109.51 / FGSC 9923 / NRRL Y-1056) (Yeast).